A 150-amino-acid chain; its full sequence is Large ribosomal subunit protein bL9 (150 aa).

The protein belongs to the bacterial ribosomal protein bL9 family.

Its function is as follows. Binds to the 23S rRNA. The polypeptide is Large ribosomal subunit protein bL9 (Lactiplantibacillus plantarum (strain ATCC BAA-793 / NCIMB 8826 / WCFS1) (Lactobacillus plantarum)).